The chain runs to 236 residues: Purine nucleoside phosphorylase DeoD-type (236 aa).

H5 contacts a purine D-ribonucleoside. Residues G21, R25, R44, and 88 to 91 (RVGT) contribute to the phosphate site. Residues 180–182 (EME) and 204–205 (SD) contribute to the a purine D-ribonucleoside site. The Proton donor role is filled by D205.

This sequence belongs to the PNP/UDP phosphorylase family. Homohexamer; trimer of homodimers.

It catalyses the reaction a purine D-ribonucleoside + phosphate = a purine nucleobase + alpha-D-ribose 1-phosphate. The catalysed reaction is a purine 2'-deoxy-D-ribonucleoside + phosphate = a purine nucleobase + 2-deoxy-alpha-D-ribose 1-phosphate. Functionally, catalyzes the reversible phosphorolytic breakdown of the N-glycosidic bond in the beta-(deoxy)ribonucleoside molecules, with the formation of the corresponding free purine bases and pentose-1-phosphate. The chain is Purine nucleoside phosphorylase DeoD-type from Shewanella sp. (strain MR-4).